A 550-amino-acid polypeptide reads, in one-letter code: Dihydroxy-acid dehydratase (550 aa).

Asp-78 contacts Mg(2+). Cys-119 is a [2Fe-2S] cluster binding site. Mg(2+)-binding residues include Asp-120 and Lys-121. Lys-121 is subject to N6-carboxylysine. Residue Cys-192 participates in [2Fe-2S] cluster binding. A Mg(2+)-binding site is contributed by Glu-440. Ser-466 serves as the catalytic Proton acceptor.

It belongs to the IlvD/Edd family. As to quaternary structure, homodimer. [2Fe-2S] cluster is required as a cofactor. Mg(2+) serves as cofactor.

The enzyme catalyses (2R)-2,3-dihydroxy-3-methylbutanoate = 3-methyl-2-oxobutanoate + H2O. It carries out the reaction (2R,3R)-2,3-dihydroxy-3-methylpentanoate = (S)-3-methyl-2-oxopentanoate + H2O. It participates in amino-acid biosynthesis; L-isoleucine biosynthesis; L-isoleucine from 2-oxobutanoate: step 3/4. The protein operates within amino-acid biosynthesis; L-valine biosynthesis; L-valine from pyruvate: step 3/4. Functionally, functions in the biosynthesis of branched-chain amino acids. Catalyzes the dehydration of (2R,3R)-2,3-dihydroxy-3-methylpentanoate (2,3-dihydroxy-3-methylvalerate) into 2-oxo-3-methylpentanoate (2-oxo-3-methylvalerate) and of (2R)-2,3-dihydroxy-3-methylbutanoate (2,3-dihydroxyisovalerate) into 2-oxo-3-methylbutanoate (2-oxoisovalerate), the penultimate precursor to L-isoleucine and L-valine, respectively. The chain is Dihydroxy-acid dehydratase from Thermodesulfovibrio yellowstonii (strain ATCC 51303 / DSM 11347 / YP87).